The sequence spans 1307 residues: Rab3 GTPase-activating protein regulatory subunit (1307 aa).

The protein belongs to the Rab3-GAP regulatory subunit family. The Rab3 GTPase-activating complex is a heterodimer composed of rbg-1 and rbg-2.

The protein localises to the cytoplasm. Probable regulatory subunit of a GTPase activating protein that has specificity for Rab3 subfamily. Rab3 proteins are involved in regulated exocytosis of neurotransmitters and hormones. Rab3 GTPase-activating complex specifically converts active Rab3-GTP to the inactive form Rab3-GDP. The sequence is that of Rab3 GTPase-activating protein regulatory subunit (rbg-2) from Caenorhabditis elegans.